We begin with the raw amino-acid sequence, 226 residues long: MYSISFQEESLLPRERLVRLGAEQLSNQELLSILIRTGNKKENVFQIASKILSSVSSLTELRHMTLSELQGMSGIGQVKAIELQAMIELGSRISKAENFEGERILSSQKLAKKMQQELSHKKQEHLVALYLNTQNQIIHQQTIFIGSLTRSLAEPREILHYAIKHMATSIILVHNHPSGATRPSRDDDQVTEKIKEACEMMGFVLLDHLIVGGDSYYSYREETDLI.

Residues 103 to 225 (RILSSQKLAK…YYSYREETDL (123 aa)) form the MPN domain. Zn(2+)-binding residues include histidine 174, histidine 176, and aspartate 187. The JAMM motif motif lies at 174–187 (HNHPSGATRPSRDD).

Belongs to the UPF0758 family.

The polypeptide is UPF0758 protein SGO_1229 (Streptococcus gordonii (strain Challis / ATCC 35105 / BCRC 15272 / CH1 / DL1 / V288)).